Here is a 366-residue protein sequence, read N- to C-terminus: Homeobox-leucine zipper protein HOX21 (366 aa).

Disordered stretches follow at residues 25–81 and 94–132; these read QQAA…SSAQ and MLGK…EKKR. Residues 36–48 are compositionally biased toward basic residues; it reads HHHHHHHGHHGHH. A compositionally biased stretch (pro residues) spans 62-74; sequence GPPPPPPPHPHNP. A compositionally biased stretch (gly residues) spans 103–115; the sequence is GDGGGGGDEVNGG. The homeobox DNA-binding region spans 127–186; that stretch reads AGEKKRRLNVEQVRTLEKNFELGNKLEPERKMQLARALGLQPRQVAIWFQNRRARWKTKQ. The interval 185–229 is leucine-zipper; sequence KQLEKDYDALKRQLDAVKAENDALLNHNKKLQAEIVALKGREAAS. Disordered regions lie at residues 239–287 and 312–336; these read EASC…GGGG and LHSS…VQAA. Residues 240-252 are compositionally biased toward polar residues; it reads ASCSNRSENSSEI.

The protein belongs to the HD-ZIP homeobox family. Class I subfamily. Expressed in seedlings, roots, stems, leaf blades and panicles.

It localises to the nucleus. Its function is as follows. Probable transcription factor. The sequence is that of Homeobox-leucine zipper protein HOX21 (HOX21) from Oryza sativa subsp. japonica (Rice).